A 334-amino-acid chain; its full sequence is Ketol-acid reductoisomerase (NADP(+)) (334 aa).

The 181-residue stretch at 1-181 folds into the KARI N-terminal Rossmann domain; sequence MTTVYYDQDV…GATRAGVIET (181 aa). NADP(+)-binding positions include 25–28, Arg-48, Ser-52, and 82–85; these read YGSQ and DEIQ. His-107 is an active-site residue. Gly-133 lines the NADP(+) pocket. Residues 182–327 enclose the KARI C-terminal knotted domain; it reads TFKEETETDL…RELREMMPFI (146 aa). Residues Asp-190, Glu-194, Glu-226, and Glu-230 each coordinate Mg(2+). Ser-251 contributes to the substrate binding site.

The protein belongs to the ketol-acid reductoisomerase family. Requires Mg(2+) as cofactor.

It carries out the reaction (2R)-2,3-dihydroxy-3-methylbutanoate + NADP(+) = (2S)-2-acetolactate + NADPH + H(+). The catalysed reaction is (2R,3R)-2,3-dihydroxy-3-methylpentanoate + NADP(+) = (S)-2-ethyl-2-hydroxy-3-oxobutanoate + NADPH + H(+). It participates in amino-acid biosynthesis; L-isoleucine biosynthesis; L-isoleucine from 2-oxobutanoate: step 2/4. Its pathway is amino-acid biosynthesis; L-valine biosynthesis; L-valine from pyruvate: step 2/4. In terms of biological role, involved in the biosynthesis of branched-chain amino acids (BCAA). Catalyzes an alkyl-migration followed by a ketol-acid reduction of (S)-2-acetolactate (S2AL) to yield (R)-2,3-dihydroxy-isovalerate. In the isomerase reaction, S2AL is rearranged via a Mg-dependent methyl migration to produce 3-hydroxy-3-methyl-2-ketobutyrate (HMKB). In the reductase reaction, this 2-ketoacid undergoes a metal-dependent reduction by NADPH to yield (R)-2,3-dihydroxy-isovalerate. This Staphylococcus aureus (strain Mu3 / ATCC 700698) protein is Ketol-acid reductoisomerase (NADP(+)).